The chain runs to 450 residues: tRNA modification GTPase MnmE (450 aa).

(6S)-5-formyl-5,6,7,8-tetrahydrofolate is bound by residues R23, E79, and K118. The region spanning 214 to 374 (GITLILVGKP…LKEHILNKVG (161 aa)) is the TrmE-type G domain. K(+) is bound at residue N224. GTP is bound by residues 224-229 (NAGKSS), 243-249 (TSIAGTT), and 268-271 (DTAG). S228 is a Mg(2+) binding site. 3 residues coordinate K(+): T243, I245, and T248. T249 contributes to the Mg(2+) binding site. K450 is a binding site for (6S)-5-formyl-5,6,7,8-tetrahydrofolate.

It belongs to the TRAFAC class TrmE-Era-EngA-EngB-Septin-like GTPase superfamily. TrmE GTPase family. In terms of assembly, homodimer. Heterotetramer of two MnmE and two MnmG subunits. K(+) serves as cofactor.

It localises to the cytoplasm. Functionally, exhibits a very high intrinsic GTPase hydrolysis rate. Involved in the addition of a carboxymethylaminomethyl (cmnm) group at the wobble position (U34) of certain tRNAs, forming tRNA-cmnm(5)s(2)U34. The chain is tRNA modification GTPase MnmE from Francisella tularensis subsp. tularensis (strain WY96-3418).